A 288-amino-acid chain; its full sequence is tRNA pseudouridine synthase A (288 aa).

The active-site Nucleophile is aspartate 59. Position 134 (tyrosine 134) interacts with substrate.

Belongs to the tRNA pseudouridine synthase TruA family. In terms of assembly, homodimer.

It carries out the reaction uridine(38/39/40) in tRNA = pseudouridine(38/39/40) in tRNA. In terms of biological role, formation of pseudouridine at positions 38, 39 and 40 in the anticodon stem and loop of transfer RNAs. In Leifsonia xyli subsp. xyli (strain CTCB07), this protein is tRNA pseudouridine synthase A.